We begin with the raw amino-acid sequence, 323 residues long: Fructose-1,6-bisphosphatase class 1 (323 aa).

4 residues coordinate Mg(2+): Glu88, Asp107, Leu109, and Asp110. Residues 110–113 and Asn200 contribute to the substrate site; that span reads DGSS. Glu272 is a binding site for Mg(2+).

The protein belongs to the FBPase class 1 family. In terms of assembly, homotetramer. It depends on Mg(2+) as a cofactor.

The protein localises to the cytoplasm. The enzyme catalyses beta-D-fructose 1,6-bisphosphate + H2O = beta-D-fructose 6-phosphate + phosphate. It functions in the pathway carbohydrate biosynthesis; gluconeogenesis. This Acinetobacter baumannii (strain ATCC 17978 / DSM 105126 / CIP 53.77 / LMG 1025 / NCDC KC755 / 5377) protein is Fructose-1,6-bisphosphatase class 1.